A 190-amino-acid polypeptide reads, in one-letter code: Coat protein (190 aa).

It belongs to the potexvirus capsid protein family.

It is found in the virion. Required for genome encapsidation. Forms ribonucleoprotein complexes along with TGB1 helicase and viral RNA. The protein is Coat protein of White clover mosaic virus (strain M) (WCMV).